The sequence spans 257 residues: Beta-fibrinogenase mucrofibrase-1 (257 aa).

The first 18 residues, 1 to 18 (MVLIRVLANLLILQLSYA), serve as a signal peptide directing secretion. A propeptide spanning residues 19–24 (QKSSEL) is cleaved from the precursor. In terms of domain architecture, Peptidase S1 spans 25–248 (VIGGDECNIN…HLDWIKGIIA (224 aa)). Cystine bridges form between C31–C162, C49–C65, C97–C255, C141–C209, C173–C188, and C199–C224. Active-site charge relay system residues include H64 and D109. The active-site Charge relay system is S203.

Belongs to the peptidase S1 family. Snake venom subfamily. As to quaternary structure, monomer. As to expression, expressed by the venom gland.

Its subcellular location is the secreted. Its function is as follows. Snake venom serine protease with strong beta-fibrinogenolytic activities, angiotensin I (AGT)-degrading activities and strong kallikrein-like activities in vitro, releasing bradykinin from kininogen (KNG1). Intravenous injection strongly lowers blood pressure in experimental rats, which may be explained by the action on angiotensin I and kininogen. In Protobothrops mucrosquamatus (Taiwan habu), this protein is Beta-fibrinogenase mucrofibrase-1.